Here is a 180-residue protein sequence, read N- to C-terminus: Crossover junction endodeoxyribonuclease RuvC (180 aa).

Active-site residues include Asp-7, Glu-66, and Asp-138. Mg(2+) is bound by residues Asp-7, Glu-66, and Asp-138.

The protein belongs to the RuvC family. Homodimer which binds Holliday junction (HJ) DNA. The HJ becomes 2-fold symmetrical on binding to RuvC with unstacked arms; it has a different conformation from HJ DNA in complex with RuvA. In the full resolvosome a probable DNA-RuvA(4)-RuvB(12)-RuvC(2) complex forms which resolves the HJ. Mg(2+) is required as a cofactor.

It localises to the cytoplasm. The enzyme catalyses Endonucleolytic cleavage at a junction such as a reciprocal single-stranded crossover between two homologous DNA duplexes (Holliday junction).. Functionally, the RuvA-RuvB-RuvC complex processes Holliday junction (HJ) DNA during genetic recombination and DNA repair. Endonuclease that resolves HJ intermediates. Cleaves cruciform DNA by making single-stranded nicks across the HJ at symmetrical positions within the homologous arms, yielding a 5'-phosphate and a 3'-hydroxyl group; requires a central core of homology in the junction. The consensus cleavage sequence is 5'-(A/T)TT(C/G)-3'. Cleavage occurs on the 3'-side of the TT dinucleotide at the point of strand exchange. HJ branch migration catalyzed by RuvA-RuvB allows RuvC to scan DNA until it finds its consensus sequence, where it cleaves and resolves the cruciform DNA. This chain is Crossover junction endodeoxyribonuclease RuvC, found in Burkholderia vietnamiensis (strain G4 / LMG 22486) (Burkholderia cepacia (strain R1808)).